The sequence spans 284 residues: MDTAELTRLADCPAPAKLNLFLHVIGRRPDGYHLLQTAFRLLDWGDALSFELRHDGVVARATDLPGVSAEHDLVVRAARLLQSYTGCRLGADIRVDKRLPMGGGLGGGSSDAATTLIALNRLWRTGVRGEELTALGLRLGADVPFFIFGRDAFAEGVGDELRPLDLPPAWYVVVAPPVTVPTVEIFAAGELTRDTEPIKITDFAASTTRNDLQAVACSRYPEIGAAIDWLAQFAPARMTGSGACVFAQVASEDDAERIVASCPGSYRAWKARSVMQHPLRGWVG.

Lysine 17 is a catalytic residue. 100–110 (PMGGGLGGGSS) provides a ligand contact to ATP. Aspartate 142 is a catalytic residue.

The protein belongs to the GHMP kinase family. IspE subfamily.

The enzyme catalyses 4-CDP-2-C-methyl-D-erythritol + ATP = 4-CDP-2-C-methyl-D-erythritol 2-phosphate + ADP + H(+). It participates in isoprenoid biosynthesis; isopentenyl diphosphate biosynthesis via DXP pathway; isopentenyl diphosphate from 1-deoxy-D-xylulose 5-phosphate: step 3/6. In terms of biological role, catalyzes the phosphorylation of the position 2 hydroxy group of 4-diphosphocytidyl-2C-methyl-D-erythritol. The chain is 4-diphosphocytidyl-2-C-methyl-D-erythritol kinase from Aromatoleum aromaticum (strain DSM 19018 / LMG 30748 / EbN1) (Azoarcus sp. (strain EbN1)).